The primary structure comprises 325 residues: Protein VP6-B (325 aa).

2 disordered regions span residues 23–123 (INLI…TIGA) and 176–229 (VAEQ…EEQA). Composition is skewed to basic and acidic residues over residues 32 to 52 (ESGK…ESKD) and 61 to 79 (SQKK…DRRI). Positions 106–123 (KVGGGGGNADAGVGTIGA) are enriched in gly residues. Composition is skewed to basic and acidic residues over residues 176–201 (VAEQ…AAER) and 210–226 (PHGD…KTSE).

The protein belongs to the orbivirus VP6 family.

It is found in the virion. Its function is as follows. Surrounds and interacts with the genomic dsRNA. Possesses ss- and dsRNA-binding capacity. Its hydrophilic nature and capability to bind ss- and dsRNA suggest that it interacts with BTV genomic RNA. In Bluetongue virus 10 (isolate USA) (BTV 10), this protein is Protein VP6-B (Segment-9).